Reading from the N-terminus, the 179-residue chain is Transcriptional repressor NrdR (179 aa).

Residues C3–C34 fold into a zinc finger. Positions I49–D139 constitute an ATP-cone domain. Residues K160–S179 form a disordered region. Residues Q169 to S179 show a composition bias toward polar residues.

The protein belongs to the NrdR family. Zn(2+) is required as a cofactor.

Functionally, negatively regulates transcription of bacterial ribonucleotide reductase nrd genes and operons by binding to NrdR-boxes. This is Transcriptional repressor NrdR from Rippkaea orientalis (strain PCC 8801 / RF-1) (Cyanothece sp. (strain PCC 8801)).